The sequence spans 158 residues: Methylglyoxal synthase (158 aa).

In terms of domain architecture, MGS-like spans 1 to 158 (MRRKLRIALV…AFEESLKVKE (158 aa)). Residues histidine 12, lysine 16, 38 to 41 (TGTT), and 63 to 64 (SG) each bind substrate. The Proton donor/acceptor role is filled by aspartate 69. Substrate is bound at residue histidine 96.

The protein belongs to the methylglyoxal synthase family.

It carries out the reaction dihydroxyacetone phosphate = methylglyoxal + phosphate. Its function is as follows. Catalyzes the formation of methylglyoxal from dihydroxyacetone phosphate. The sequence is that of Methylglyoxal synthase from Treponema socranskii.